The following is a 249-amino-acid chain: MEISHILEDLVYDNGVLPREAIEAAIVKHNQITPYLLKILEEAIDHVSDIIDDDCYQGHLYAMYLLAQFRETRALPLIIKLFSFEQDIPHAIAGDVLTEDLSRILASVCDDVSLIQELIETPRVNPYVQAAAISSLVSLVGVKKLSRGAAIRYFGELLNYRLEKRPSFAWDSLVASICALYPKELFYPISKAFSAGLIDKSFISMEDVETIIHEESIDSCLQEVFSSTDLIDDTLEEMEKWLERFPFES.

This sequence belongs to the chlamydial CPn_0206/CT203/TC_0475 family.

This is an uncharacterized protein from Chlamydia muridarum (strain MoPn / Nigg).